A 232-amino-acid chain; its full sequence is Ion-translocating oxidoreductase complex subunit E (232 aa).

6 helical membrane passes run G18 to A38, L39 to V59, I69 to A89, G93 to G113, A127 to A147, and P182 to L202.

This sequence belongs to the NqrDE/RnfAE family. The complex is composed of six subunits: RnfA, RnfB, RnfC, RnfD, RnfE and RnfG.

The protein localises to the cell inner membrane. In terms of biological role, part of a membrane-bound complex that couples electron transfer with translocation of ions across the membrane. The chain is Ion-translocating oxidoreductase complex subunit E from Shewanella baltica (strain OS185).